The primary structure comprises 265 residues: Phosphate import ATP-binding protein PstB 2 (265 aa).

The region spanning 13-260 is the ABC transporter domain; it reads FRTENLNVYY…PTKQATRDYV (248 aa). Residue 45-52 participates in ATP binding; it reads GPSGCGKS.

This sequence belongs to the ABC transporter superfamily. Phosphate importer (TC 3.A.1.7) family. In terms of assembly, the complex is composed of two ATP-binding proteins (PstB), two transmembrane proteins (PstC and PstA) and a solute-binding protein (PstS).

It is found in the cell inner membrane. The enzyme catalyses phosphate(out) + ATP + H2O = ADP + 2 phosphate(in) + H(+). Part of the ABC transporter complex PstSACB involved in phosphate import. Responsible for energy coupling to the transport system. The polypeptide is Phosphate import ATP-binding protein PstB 2 (Synechococcus sp. (strain JA-3-3Ab) (Cyanobacteria bacterium Yellowstone A-Prime)).